Consider the following 63-residue polypeptide: Small ribosomal subunit protein eS17 (63 aa).

Belongs to the eukaryotic ribosomal protein eS17 family.

The sequence is that of Small ribosomal subunit protein eS17 from Methanococcus maripaludis (strain C6 / ATCC BAA-1332).